The primary structure comprises 314 residues: MVKKNFIPSVSLVRRDLPTLVTTTTSSTALSKPTSSVVSETSSKSLPSLTSSAFSTSSGATSSSSLIVASITPPSTAGNPFILNAADKPNGTVYIAVGAVIGAIFISILIWWLVSSYLSRRFTMTNSYANDSKNLYRGHHKHSSSLQSNPFDINDEKSYMQDDWDSMSQLESSQYEDAASPFNPIQDPFTDXRRSLFISPTLQVSQYEKSHSRHQSKDTNIFIDDPSLYVGTYLEEEEEEERKLNLNRPQRAASPERKEKKINSMEGYHKRNQSSLGLIPVASATSNTSSPKKAHKRQAPSMFLDDVLNGREII.

A disordered region spans residues 32-60; it reads KPTSSVVSETSSKSLPSLTSSAFSTSSGA. Residues 93-113 traverse the membrane as a helical segment; that stretch reads VYIAVGAVIGAIFISILIWWL. Phosphoserine is present on residues S148, S254, and S274. Residues 240–309 form a disordered region; sequence EERKLNLNRP…PSMFLDDVLN (70 aa). A compositionally biased stretch (basic and acidic residues) spans 254–269; sequence SPERKEKKINSMEGYH.

Belongs to the PRM5 family.

The protein resides in the vacuole membrane. The sequence is that of Vacuolar membrane protein VL3_4134 from Saccharomyces cerevisiae (strain Zymaflore VL3) (Baker's yeast).